A 408-amino-acid polypeptide reads, in one-letter code: uncharacterized protein (408 aa).

Residues 376-386 show a composition bias toward polar residues; the sequence is NELNDPNSVYN. A disordered region spans residues 376-408; it reads NELNDPNSVYNSPEFDHQGDQKKLTEENGCVVQ. Basic and acidic residues predominate over residues 389–401; sequence EFDHQGDQKKLTE.

This is an uncharacterized protein from Acanthamoeba polyphaga (Amoeba).